The following is a 500-amino-acid chain: Lysine--tRNA ligase (500 aa).

Mg(2+) contacts are provided by E410 and E417.

This sequence belongs to the class-II aminoacyl-tRNA synthetase family. In terms of assembly, homodimer. It depends on Mg(2+) as a cofactor.

It is found in the cytoplasm. The enzyme catalyses tRNA(Lys) + L-lysine + ATP = L-lysyl-tRNA(Lys) + AMP + diphosphate. This chain is Lysine--tRNA ligase, found in Mycoplasma capricolum subsp. capricolum (strain California kid / ATCC 27343 / NCTC 10154).